A 217-amino-acid polypeptide reads, in one-letter code: Ras-related protein RABA2c (217 aa).

GTP-binding positions include 19 to 27 (GDSGVGKSN), 38 to 44 (CLESKST), 67 to 71 (DTAGQ), 125 to 128 (NKSD), and 155 to 157 (SAL). The short motif at 41 to 49 (SKSTIGVEF) is the Effector region element. The segment at 195 to 217 (PGQGTTINVDDTSGGAKRACCSS) is disordered. 2 S-geranylgeranyl cysteine lipidation sites follow: C214 and C215.

Belongs to the small GTPase superfamily. Rab family. Expressed in root tips.

The protein resides in the endosome membrane. It localises to the golgi apparatus. The protein localises to the trans-Golgi network membrane. Intracellular vesicle trafficking and protein transport. The polypeptide is Ras-related protein RABA2c (RABA2C) (Arabidopsis thaliana (Mouse-ear cress)).